Consider the following 213-residue polypeptide: Octanoyltransferase (213 aa).

The 176-residue stretch at 32–207 folds into the BPL/LPL catalytic domain; the sequence is ESTLDEIWLV…NILALLNNPD (176 aa). Residues 71 to 78, 138 to 140, and 151 to 153 contribute to the substrate site; these read RGGQVTYH, SLG, and GLA. C169 acts as the Acyl-thioester intermediate in catalysis.

Belongs to the LipB family.

It localises to the cytoplasm. It catalyses the reaction octanoyl-[ACP] + L-lysyl-[protein] = N(6)-octanoyl-L-lysyl-[protein] + holo-[ACP] + H(+). It participates in protein modification; protein lipoylation via endogenous pathway; protein N(6)-(lipoyl)lysine from octanoyl-[acyl-carrier-protein]: step 1/2. In terms of biological role, catalyzes the transfer of endogenously produced octanoic acid from octanoyl-acyl-carrier-protein onto the lipoyl domains of lipoate-dependent enzymes. Lipoyl-ACP can also act as a substrate although octanoyl-ACP is likely to be the physiological substrate. This is Octanoyltransferase from Escherichia coli (strain SMS-3-5 / SECEC).